The primary structure comprises 168 residues: Crossover junction endodeoxyribonuclease RuvC (168 aa).

Residues D9, E70, and D145 contribute to the active site. The Mg(2+) site is built by D9, E70, and D145.

Belongs to the RuvC family. Homodimer which binds Holliday junction (HJ) DNA. The HJ becomes 2-fold symmetrical on binding to RuvC with unstacked arms; it has a different conformation from HJ DNA in complex with RuvA. In the full resolvosome a probable DNA-RuvA(4)-RuvB(12)-RuvC(2) complex forms which resolves the HJ. Mg(2+) is required as a cofactor.

It localises to the cytoplasm. The enzyme catalyses Endonucleolytic cleavage at a junction such as a reciprocal single-stranded crossover between two homologous DNA duplexes (Holliday junction).. The RuvA-RuvB-RuvC complex processes Holliday junction (HJ) DNA during genetic recombination and DNA repair. Endonuclease that resolves HJ intermediates. Cleaves cruciform DNA by making single-stranded nicks across the HJ at symmetrical positions within the homologous arms, yielding a 5'-phosphate and a 3'-hydroxyl group; requires a central core of homology in the junction. The consensus cleavage sequence is 5'-(A/T)TT(C/G)-3'. Cleavage occurs on the 3'-side of the TT dinucleotide at the point of strand exchange. HJ branch migration catalyzed by RuvA-RuvB allows RuvC to scan DNA until it finds its consensus sequence, where it cleaves and resolves the cruciform DNA. The chain is Crossover junction endodeoxyribonuclease RuvC from Chlamydia felis (strain Fe/C-56) (Chlamydophila felis).